The chain runs to 671 residues: DNA ligase (671 aa).

NAD(+) is bound by residues 32–36 (DAEYD), 81–82 (SL), and Glu113. Lys115 acts as the N6-AMP-lysine intermediate in catalysis. Positions 136, 173, 290, and 314 each coordinate NAD(+). Positions 408, 411, 426, and 432 each coordinate Zn(2+). Residues 593–671 (EIDSPFAGKT…EAEMMRLLGE (79 aa)) form the BRCT domain.

It belongs to the NAD-dependent DNA ligase family. LigA subfamily. The cofactor is Mg(2+). Mn(2+) is required as a cofactor.

The enzyme catalyses NAD(+) + (deoxyribonucleotide)n-3'-hydroxyl + 5'-phospho-(deoxyribonucleotide)m = (deoxyribonucleotide)n+m + AMP + beta-nicotinamide D-nucleotide.. In terms of biological role, DNA ligase that catalyzes the formation of phosphodiester linkages between 5'-phosphoryl and 3'-hydroxyl groups in double-stranded DNA using NAD as a coenzyme and as the energy source for the reaction. It is essential for DNA replication and repair of damaged DNA. The protein is DNA ligase of Klebsiella pneumoniae (strain 342).